The chain runs to 574 residues: MSIRPLTLNGLDEPETSFEELNTTLPRFQSHETLTLEENVPPLSTSTYIPPPSSVGTSDTGTVFSNSTSAFWSNKQADDDQDMEVDQDDEFLNDFQEFQNKKDDFDDAIKTNFHLRNGCRTGPFKNDIFAEEFDRKLSLEDKPRLKQPRSMMELKPKRKLSNSVTSRNLRSGNSVRFKKSMPNLALVNPAIREEEEDEEREREDQREFNYKIDNDTQDTILAKFSSDDEGDFLTGFEELEGEAIDETISSNDKESADHPRFLKKSSSSLPLKISPAQYDIVKHDELLTPGLHRRQRDWNTQQELDSFKEKRSVRHCSNQNVQLNGPAKIKTIKQQIDHNTPMKKGSMIYNPKTMKWEGNENVLSKFSDVDTANRKALLIKNKLQRDADSKKQKYSDLQHARATSRNQKVIGNMILDEQNLRWVSVSEEEADPFAGIPEINLPPVGKSMKKRSSSPFLRSKSQVNTPFVSNDNDGVYQSTAAQARLRKYHSMRTLNGTTETPEISSTFHLSSRALEKFYHEENRWCKKLASWFIPRDETIISVDEETIMDESTVNSKRKSYMYEIRNMVINSTKD.

A disordered region spans residues 154 to 173 (LKPKRKLSNSVTSRNLRSGN). A compositionally biased stretch (polar residues) spans 161–173 (SNSVTSRNLRSGN). Ser317 carries the post-translational modification Phosphoserine.

It to S.pombe byr4. Interacts with BUB2. In terms of processing, multiply phosphorylated in a cell-cycle-dependent manner with the major phosphorylation occurring in mitosis.

Its subcellular location is the cytoplasm. It is found in the cytoskeleton. The protein localises to the spindle pole. Part of a checkpoint which monitors spindle integrity and prevents premature exit from mitosis. This cell-cycle arrest depends upon inhibition of the G-protein TEM1 by the BFA1/BUB2 complex. This is Mitotic check point protein BFA1 (BFA1) from Saccharomyces cerevisiae (strain ATCC 204508 / S288c) (Baker's yeast).